We begin with the raw amino-acid sequence, 360 residues long: Heme A synthase (360 aa).

9 helical membrane-spanning segments follow: residues 29–49 (WLFAMAALVIAMVAVGGATRL), 111–131 (FLGRLIGFAFFLPLGWFWWTG), 139–159 (LGLLGLGVLGGLQGAVGWIMV), 175–195 (LAAHLTLASAIFAGLVWLAAG), 210–230 (LTALALPLLMLVQIALGGLVA), 242–262 (PLMDGAFIPPLSGLFAVTPWI), 269–289 (VALVQLNHRLAAYGLLAVAAL), 309–329 (AILGLVTAQAALGITTLLLAV), and 330–350 (PLWAGLAHQVTAMLVLGMAAV). His276 provides a ligand contact to heme. His337 lines the heme pocket.

This sequence belongs to the COX15/CtaA family. Type 2 subfamily. In terms of assembly, interacts with CtaB. Heme b serves as cofactor.

It is found in the cell membrane. It catalyses the reaction Fe(II)-heme o + 2 A + H2O = Fe(II)-heme a + 2 AH2. Its pathway is porphyrin-containing compound metabolism; heme A biosynthesis; heme A from heme O: step 1/1. Catalyzes the conversion of heme O to heme A by two successive hydroxylations of the methyl group at C8. The first hydroxylation forms heme I, the second hydroxylation results in an unstable dihydroxymethyl group, which spontaneously dehydrates, resulting in the formyl group of heme A. In Methylobacterium nodulans (strain LMG 21967 / CNCM I-2342 / ORS 2060), this protein is Heme A synthase.